A 495-amino-acid chain; its full sequence is Cytochrome P450 710A1 (495 aa).

The chain crosses the membrane as a helical span at residues V5–V25. C434 provides a ligand contact to heme.

The protein belongs to the cytochrome P450 family. Requires heme as cofactor. Expressed in the vascular tissues of roots, shoots and leaves. Expressed in root tips and sepals. Very low expression in stems and siliques.

The protein localises to the membrane. The catalysed reaction is 5-dehydroepisterol + NADPH + O2 + H(+) = ergosta-5,7,22,24(28)-tetraen-3beta-ol + NADP(+) + 2 H2O. It participates in steroid biosynthesis; sterol biosynthesis. In terms of biological role, required to form the C-22 double bond in the sterol side chain. Possesses in vitro C-22 desaturase activity toward beta-sitosterol and produces stigmasterol. No activity with campesterol. The polypeptide is Cytochrome P450 710A1 (Arabidopsis thaliana (Mouse-ear cress)).